The sequence spans 332 residues: HTH-type transcriptional regulator IdnR (332 aa).

Residues 6–60 form the HTH lacI-type domain; the sequence is ISLQDIATLAGVTKMTVSRYIRSPKKVAKETGERIAKIMEEINYIPNRAPGMLLN. The H-T-H motif DNA-binding region spans 8–27; it reads LQDIATLAGVTKMTVSRYIR.

Functionally, idn operon regulator. May repress gntKU and gntT genes when growing on L-idonate. The protein is HTH-type transcriptional regulator IdnR (idnR) of Escherichia coli (strain K12).